Here is a 338-residue protein sequence, read N- to C-terminus: SPbeta prophage-derived uncharacterized protein YonB (338 aa).

The chain is SPbeta prophage-derived uncharacterized protein YonB (yonB) from Bacillus subtilis (strain 168).